A 328-amino-acid chain; its full sequence is D-cysteine desulfhydrase (328 aa).

At Lys-51 the chain carries N6-(pyridoxal phosphate)lysine.

The protein belongs to the ACC deaminase/D-cysteine desulfhydrase family. In terms of assembly, homodimer. The cofactor is pyridoxal 5'-phosphate.

The enzyme catalyses D-cysteine + H2O = hydrogen sulfide + pyruvate + NH4(+) + H(+). Functionally, catalyzes the alpha,beta-elimination reaction of D-cysteine and of several D-cysteine derivatives. It could be a defense mechanism against D-cysteine. In Salmonella paratyphi B (strain ATCC BAA-1250 / SPB7), this protein is D-cysteine desulfhydrase.